A 232-amino-acid polypeptide reads, in one-letter code: Cytidylate kinase (232 aa).

An ATP-binding site is contributed by 19–27 (GPAGVGKTT).

It belongs to the cytidylate kinase family. Type 1 subfamily.

Its subcellular location is the cytoplasm. The enzyme catalyses CMP + ATP = CDP + ADP. It catalyses the reaction dCMP + ATP = dCDP + ADP. The protein is Cytidylate kinase of Nitratidesulfovibrio vulgaris (strain ATCC 29579 / DSM 644 / CCUG 34227 / NCIMB 8303 / VKM B-1760 / Hildenborough) (Desulfovibrio vulgaris).